We begin with the raw amino-acid sequence, 421 residues long: Thymidine phosphorylase (421 aa).

This sequence belongs to the thymidine/pyrimidine-nucleoside phosphorylase family. Homodimer.

The enzyme catalyses thymidine + phosphate = 2-deoxy-alpha-D-ribose 1-phosphate + thymine. Its function is as follows. The enzymes which catalyze the reversible phosphorolysis of pyrimidine nucleosides are involved in the degradation of these compounds and in their utilization as carbon and energy sources, or in the rescue of pyrimidine bases for nucleotide synthesis. The chain is Thymidine phosphorylase (deoA) from Mycoplasma pneumoniae (strain ATCC 29342 / M129 / Subtype 1) (Mycoplasmoides pneumoniae).